Here is a 494-residue protein sequence, read N- to C-terminus: UPF0371 protein SSA_0208 (494 aa).

Belongs to the UPF0371 family.

This chain is UPF0371 protein SSA_0208, found in Streptococcus sanguinis (strain SK36).